The chain runs to 74 residues: Cytoplasmic envelopment protein 3 (74 aa).

G2 carries N-myristoyl glycine; by host lipidation. Residues 15-16 carry the Di-leucine-like internalization motif motif; that stretch reads LV. Residues 34–40 are asp/Glu-rich (acidic); the sequence is SMEEFDI. A disordered region spans residues 36–74; sequence EEFDIPPPPPLPKPVFKQPGPYKIPARSQRCPSKRRDPY.

Belongs to the herpesviridae cytoplasmic envelopment protein 3 family. In terms of assembly, interacts with cytoplasmic envelopment protein 2; this interaction is essential for the proper localization of each protein to the assembly complex and thus for the production of infectious virus. Myristoylation and palmitoylation (probably on one or more of the nearby cysteines at the N-terminus) enable membrane-binding and Golgi apparatus-specific targeting and are essential for efficient packaging. In terms of processing, phosphorylated. Phosphorylation does not seem to be required for recycling to the host Golgi apparatus. Packaging is selective for underphosphorylated forms.

The protein resides in the virion tegument. Its subcellular location is the virion membrane. It localises to the host cell membrane. The protein localises to the host Golgi apparatus membrane. Functionally, plays an important role in the cytoplasmic envelopment of tegument proteins and capsids during the assembly and egress processes. Also participates in viral entry at the fusion step probably by regulating the core fusion machinery. In Equine herpesvirus 1 (strain Ab4p) (EHV-1), this protein is Cytoplasmic envelopment protein 3.